The chain runs to 604 residues: Beta-alanine transporter (604 aa).

At 1–23 the chain is on the cytoplasmic side; sequence MDFDEVLREVGSFGLYQKVIICS. The helical transmembrane segment at 24–44 threads the bilayer; it reads VLLPAALPCAFHAYSQLFIAA. The Extracellular portion of the chain corresponds to 45 to 151; that stretch reads TPQHFCRVPE…QEWNLVCDRS (107 aa). N-linked (GlcNAc...) asparagine glycans are attached at residues asparagine 68 and asparagine 88. The helical transmembrane segment at 152-172 threads the bilayer; that stretch reads FLVTLALVVFGVGGLLGNYVF. At 173-182 the chain is on the cytoplasmic side; that stretch reads GYLVDLWGRR. A helical membrane pass occupies residues 183–203; sequence PSFYAYLLLEIIACAASAFAW. Residues 204–212 lie on the Extracellular side of the membrane; sequence NYYTWLGLR. Residues 213–233 traverse the membrane as a helical segment; that stretch reads FVVGLTVPAILASPYVLAIEL. Topologically, residues 234 to 243 are cytoplasmic; the sequence is VGPERRVFCT. Residues 244 to 264 form a helical membrane-spanning segment; the sequence is IVSNIAYSLGLVVLAGVIYIV. The Extracellular segment spans residues 265 to 268; that stretch reads RDWR. Residues 269–289 form a helical membrane-spanning segment; it reads ELSLAVSMPLLMLFSCFFVLP. Topologically, residues 290–362 are cytoplasmic; sequence ESPRWLMAVG…FRGPNMRRKT (73 aa). The helical transmembrane segment at 363–383 threads the bilayer; that stretch reads LIITLIWFANTSVYVGLSYYA. Residues 384 to 390 lie on the Extracellular side of the membrane; it reads PALGGDE. A helical membrane pass occupies residues 391–411; it reads IWNFFLAGAVELPTYLLLWPG. At 412–418 the chain is on the cytoplasmic side; sequence LSYFGRR. A helical membrane pass occupies residues 419–439; it reads WILFISMLVGGVACVATFLYP. The Extracellular segment spans residues 440–442; it reads DIT. Residues 443–463 traverse the membrane as a helical segment; it reads LLLYCVGKMGISSSFVVLPLM. Over 464-473 the chain is Cytoplasmic; sequence ASELYPTVVR. A helical transmembrane segment spans residues 474–494; it reads GLGMSFSSVISMVGPIVIPMI. Over 495 to 501 the chain is Extracellular; it reads NHMGQQM. Residues 502–522 traverse the membrane as a helical segment; that stretch reads LVLPLIVMGALLILGGFASLL. Residues 523 to 604 are Cytoplasmic-facing; it reads LPETRNRNLP…SICKNEMRTL (82 aa).

Belongs to the major facilitator (TC 2.A.1) superfamily. Organic cation transporter (TC 2.A.1.19) family. In terms of tissue distribution, expressed in the head and predominantly in the retinal pigment cells of the compound eye.

The protein resides in the cell membrane. Beta-alanine transporter required for the uptake of beta-alanine by the glia. Required for the recycling process of the neurotransmitter histamine in photoreceptor neurons of the compound eye and therefore for photoreceptor synaptic transmission. Following histamine release from photoreceptors and its uptake by glia, histamine is conjugated to beta-alanine by e/Ebony to form the inactive metabolite, carcinine. The protein is Beta-alanine transporter of Drosophila melanogaster (Fruit fly).